Reading from the N-terminus, the 446-residue chain is tRNA modification GTPase MnmE (446 aa).

(6S)-5-formyl-5,6,7,8-tetrahydrofolate contacts are provided by Arg22, Glu80, and Lys119. In terms of domain architecture, TrmE-type G spans 215 to 370; the sequence is GLSLVIAGRP…LKKVIKQVVG (156 aa). Residue Asn225 coordinates K(+). GTP is bound by residues 225–230, 244–250, and 269–272; these read NAGKST, TEIAGTT, and DTAG. Ser229 contributes to the Mg(2+) binding site. K(+) is bound by residues Thr244, Ile246, and Thr249. Thr250 serves as a coordination point for Mg(2+). Lys446 is a binding site for (6S)-5-formyl-5,6,7,8-tetrahydrofolate.

It belongs to the TRAFAC class TrmE-Era-EngA-EngB-Septin-like GTPase superfamily. TrmE GTPase family. As to quaternary structure, homodimer. Heterotetramer of two MnmE and two MnmG subunits. The cofactor is K(+).

It is found in the cytoplasm. In terms of biological role, exhibits a very high intrinsic GTPase hydrolysis rate. Involved in the addition of a carboxymethylaminomethyl (cmnm) group at the wobble position (U34) of certain tRNAs, forming tRNA-cmnm(5)s(2)U34. In Legionella pneumophila (strain Corby), this protein is tRNA modification GTPase MnmE.